The primary structure comprises 173 residues: NAD(P)H-quinone oxidoreductase subunit J (173 aa).

It belongs to the complex I 30 kDa subunit family. NDH-1 can be composed of about 15 different subunits; different subcomplexes with different compositions have been identified which probably have different functions.

The protein localises to the cellular thylakoid membrane. The catalysed reaction is a plastoquinone + NADH + (n+1) H(+)(in) = a plastoquinol + NAD(+) + n H(+)(out). The enzyme catalyses a plastoquinone + NADPH + (n+1) H(+)(in) = a plastoquinol + NADP(+) + n H(+)(out). NDH-1 shuttles electrons from an unknown electron donor, via FMN and iron-sulfur (Fe-S) centers, to quinones in the respiratory and/or the photosynthetic chain. The immediate electron acceptor for the enzyme in this species is believed to be plastoquinone. Couples the redox reaction to proton translocation, and thus conserves the redox energy in a proton gradient. Cyanobacterial NDH-1 also plays a role in inorganic carbon-concentration. In Prochlorococcus marinus (strain NATL2A), this protein is NAD(P)H-quinone oxidoreductase subunit J.